Here is a 291-residue protein sequence, read N- to C-terminus: MLRGSMVALVTPMQADGSLDWEALHKLVDWHLQEGTDAIVAVGTTGESATLDVKEHIAVIRAVVDQVNGRVPVIAGTGANSTSEAIELTQAAKDGGVDACLLVAPYYNKPTQEGLFLHHQKIAASVAIPQLLYNVPGRTAVDMLPETIVRLSHVDNIVGVKEATGDIARVGQILESAKAGFLLISGDDDTAVDFIAAGGVGEISVTANVAPKLVAQMCELAAQGKVEEARAINARLADVHTAMFLESNPIPVKWALAKMGLMPNGIRLPLTPLDAKYHLQVEQALRAANLL.

Thr45 serves as a coordination point for pyruvate. Tyr133 serves as the catalytic Proton donor/acceptor. The active-site Schiff-base intermediate with substrate is Lys161. Ile203 contacts pyruvate.

It belongs to the DapA family. Homotetramer; dimer of dimers.

The protein resides in the cytoplasm. It carries out the reaction L-aspartate 4-semialdehyde + pyruvate = (2S,4S)-4-hydroxy-2,3,4,5-tetrahydrodipicolinate + H2O + H(+). Its pathway is amino-acid biosynthesis; L-lysine biosynthesis via DAP pathway; (S)-tetrahydrodipicolinate from L-aspartate: step 3/4. Its function is as follows. Catalyzes the condensation of (S)-aspartate-beta-semialdehyde [(S)-ASA] and pyruvate to 4-hydroxy-tetrahydrodipicolinate (HTPA). This is 4-hydroxy-tetrahydrodipicolinate synthase from Saccharophagus degradans (strain 2-40 / ATCC 43961 / DSM 17024).